The following is a 199-amino-acid chain: UPF0637 protein LACR_1918 (199 aa).

It belongs to the UPF0637 family.

The protein is UPF0637 protein LACR_1918 of Lactococcus lactis subsp. cremoris (strain SK11).